The chain runs to 246 residues: Eukaryotic translation initiation factor 6 (246 aa).

Belongs to the eIF-6 family. In terms of assembly, monomer. Associates with the 60S ribosomal subunit.

It localises to the cytoplasm. It is found in the nucleus. The protein resides in the nucleolus. In terms of biological role, binds to the 60S ribosomal subunit and prevents its association with the 40S ribosomal subunit to form the 80S initiation complex in the cytoplasm. May also be involved in ribosome biogenesis. Involved in miRNA-mediated gene silencing. The sequence is that of Eukaryotic translation initiation factor 6 from Caenorhabditis elegans.